A 60-amino-acid polypeptide reads, in one-letter code: MAKKDLFHKDIEGRLDELKHGKPKKEKASLGENLNKIFVIALGLMILIGLIFTLIGALRK.

Residues 37 to 57 (IFVIALGLMILIGLIFTLIGA) form a helical membrane-spanning segment.

Part of the accessory SecA2/SecY2 protein translocation apparatus required to export cell wall protein GspB.

Its subcellular location is the cell membrane. Functionally, part of the accessory SecA2/SecY2 system specifically required to export GspB, a serine-rich repeat cell wall protein encoded upstream in the same operon. The chain is Accessory secretory protein Asp4 (asp4) from Streptococcus gordonii.